Reading from the N-terminus, the 892-residue chain is UPF0182 protein Gura_0902 (892 aa).

The next 7 membrane-spanning stretches (helical) occupy residues 6–26, 50–70, 103–123, 158–178, 201–221, 248–268, and 271–291; these read FIII…LINF, VGAG…NLHF, LGIL…AMQW, MLKI…GAVY, LAVL…LNGC, ILTV…WQGA, and LALL…KAYP.

It belongs to the UPF0182 family.

Its subcellular location is the cell membrane. The chain is UPF0182 protein Gura_0902 from Geotalea uraniireducens (strain Rf4) (Geobacter uraniireducens).